Here is a 178-residue protein sequence, read N- to C-terminus: ATP-dependent protease subunit HslV (178 aa).

Thr5 is a catalytic residue. The Na(+) site is built by Gly161, Cys164, and Thr167.

Belongs to the peptidase T1B family. HslV subfamily. In terms of assembly, a double ring-shaped homohexamer of HslV is capped on each side by a ring-shaped HslU homohexamer. The assembly of the HslU/HslV complex is dependent on binding of ATP.

It localises to the cytoplasm. It catalyses the reaction ATP-dependent cleavage of peptide bonds with broad specificity.. Its activity is regulated as follows. Allosterically activated by HslU binding. Its function is as follows. Protease subunit of a proteasome-like degradation complex believed to be a general protein degrading machinery. This is ATP-dependent protease subunit HslV from Nitratiruptor sp. (strain SB155-2).